The primary structure comprises 418 residues: Bile acid-CoA:amino acid N-acyltransferase (418 aa).

Position 125 is a phosphoserine (serine 125). Catalysis depends on charge relay system residues cysteine 235, aspartate 328, and histidine 362. Serine 416 bears the Phosphoserine mark.

Belongs to the C/M/P thioester hydrolase family. In terms of assembly, monomer. As to expression, expressed in the gallbladder mucosa and pancreas. Expressed in hepatocytes (at protein level).

It is found in the cytoplasm. It localises to the cytosol. Its subcellular location is the peroxisome. It carries out the reaction choloyl-CoA + glycine = glycocholate + CoA + H(+). The catalysed reaction is hexadecanoyl-CoA + H2O = hexadecanoate + CoA + H(+). It catalyses the reaction choloyl-CoA + H2O = cholate + CoA + H(+). The enzyme catalyses chenodeoxycholoyl-CoA + H2O = chenodeoxycholate + CoA + H(+). It carries out the reaction eicosanoyl-CoA + H2O = eicosanoate + CoA + H(+). The catalysed reaction is octadecanoyl-CoA + H2O = octadecanoate + CoA + H(+). It catalyses the reaction docosanoyl-CoA + H2O = docosanoate + CoA + H(+). The enzyme catalyses tetracosanoyl-CoA + H2O = tetracosanoate + CoA + H(+). It carries out the reaction hexacosanoyl-CoA + H2O = hexacosanoate + CoA + H(+). The catalysed reaction is dodecanoyl-CoA + H2O = dodecanoate + CoA + H(+). It catalyses the reaction tetradecanoyl-CoA + H2O = tetradecanoate + CoA + H(+). The enzyme catalyses choloyl-CoA + taurine = taurocholate + CoA + H(+). It carries out the reaction chenodeoxycholoyl-CoA + glycine = glycochenodeoxycholate + CoA + H(+). The catalysed reaction is chenodeoxycholoyl-CoA + taurine = taurochenodeoxycholate + CoA + H(+). It catalyses the reaction eicosanoyl-CoA + glycine = N-eicosanoylglycinate + CoA + H(+). The enzyme catalyses hexacosanoyl-CoA + glycine = N-hexacosanoylglycine + CoA + H(+). It carries out the reaction docosanoyl-CoA + glycine = N-docosanoylglycine + CoA + H(+). Catalyzes the amidation of bile acids (BAs) with the amino acids taurine and glycine. More than 95% of the BAs are N-acyl amidates with glycine and taurine. Amidation of BAs in the liver with glycine or taurine prior to their excretion into bile is an important biochemical event in bile acid metabolism. This conjugation (or amidation) plays several important biological roles in that it promotes the secretion of BAs and cholesterol into bile and increases the detergent properties of BAs in the intestine, which facilitates lipid and vitamin absorption. May also act as an acyl-CoA thioesterase that regulates intracellular levels of free fatty acids. In vitro, catalyzes the hydrolysis of long- and very long-chain saturated acyl-CoAs to the free fatty acid and coenzyme A (CoASH), and conjugates glycine to these acyl-CoAs. This Homo sapiens (Human) protein is Bile acid-CoA:amino acid N-acyltransferase (BAAT).